The sequence spans 81 residues: uncharacterized protein (81 aa).

This sequence belongs to the ycf70 family.

The protein resides in the plastid. It localises to the chloroplast. This is an uncharacterized protein from Saccharum officinarum (Sugarcane).